Consider the following 551-residue polypeptide: Glucans biosynthesis protein D (551 aa).

The segment at residues 1–32 (MNRRRFIKGSMAMAAVCGSSGIASLFSQAAFA) is a signal peptide (tat-type signal).

It belongs to the OpgD/OpgG family. Predicted to be exported by the Tat system. The position of the signal peptide cleavage has not been experimentally proven.

The protein resides in the periplasm. Its pathway is glycan metabolism; osmoregulated periplasmic glucan (OPG) biosynthesis. Probably involved in the control of the structural glucose backbone of osmoregulated periplasmic glucans (OPGs). This chain is Glucans biosynthesis protein D, found in Salmonella enteritidis PT4 (strain P125109).